Reading from the N-terminus, the 581-residue chain is DNA primase (581 aa).

The CHC2-type zinc finger occupies 40 to 64; that stretch reads CPFHNEKTPSFTVNGEKQFYHCFGC. A Toprim domain is found at 259–341; the sequence is QRLLVVEGYM…GRQVRFMFLP (83 aa). Mg(2+) contacts are provided by Glu-265, Asp-309, and Asp-311.

This sequence belongs to the DnaG primase family. As to quaternary structure, monomer. Interacts with DnaB. Requires Zn(2+) as cofactor. The cofactor is Mg(2+).

The catalysed reaction is ssDNA + n NTP = ssDNA/pppN(pN)n-1 hybrid + (n-1) diphosphate.. RNA polymerase that catalyzes the synthesis of short RNA molecules used as primers for DNA polymerase during DNA replication. The sequence is that of DNA primase from Salmonella typhimurium (strain LT2 / SGSC1412 / ATCC 700720).